A 567-amino-acid polypeptide reads, in one-letter code: DNA ligase B (567 aa).

Lysine 132 acts as the N6-AMP-lysine intermediate in catalysis.

Belongs to the NAD-dependent DNA ligase family. LigB subfamily.

The enzyme catalyses NAD(+) + (deoxyribonucleotide)n-3'-hydroxyl + 5'-phospho-(deoxyribonucleotide)m = (deoxyribonucleotide)n+m + AMP + beta-nicotinamide D-nucleotide.. Its function is as follows. Catalyzes the formation of phosphodiester linkages between 5'-phosphoryl and 3'-hydroxyl groups in double-stranded DNA using NAD as a coenzyme and as the energy source for the reaction. This chain is DNA ligase B, found in Yersinia pestis bv. Antiqua (strain Angola).